The primary structure comprises 274 residues: GATA transcription factor 1 (274 aa).

Disordered regions lie at residues 1–39 (MEME…KTGL) and 102–132 (SPVS…TAVA). The short motif at 152 to 159 (KARSKRRR) is the Nuclear localization signal element. The GATA-type zinc finger occupies 190 to 244 (LIMGRKCQHCGAEKTPQWRAGPAGPKTLCNACGVRYKSGRLVPEYRPANSPTFTA).

Belongs to the type IV zinc-finger family. Class A subfamily. As to expression, mostly expressed in roots. Also expressed in stems, flowers and leaves.

Its subcellular location is the nucleus. Functionally, transcriptional activator that specifically binds 5'-GATA-3' or 5'-GAT-3' motifs within gene promoters. May be involved in the regulation of some light-responsive genes. This is GATA transcription factor 1 (GATA1) from Arabidopsis thaliana (Mouse-ear cress).